The following is a 233-amino-acid chain: Adenosylcobinamide-GDP ribazoletransferase (233 aa).

7 helical membrane-spanning segments follow: residues 24-44 (LWAF…VLYL), 46-66 (LPLS…LLHL), 96-116 (IAGL…LQLV), 117-137 (PFYA…LALA), 156-176 (SGQL…VVVY), 184-204 (LLGL…FGGI), and 209-229 (IGAI…FAGA).

Belongs to the CobS family. Mg(2+) is required as a cofactor.

The protein localises to the cell membrane. It catalyses the reaction alpha-ribazole + adenosylcob(III)inamide-GDP = adenosylcob(III)alamin + GMP + H(+). It carries out the reaction alpha-ribazole 5'-phosphate + adenosylcob(III)inamide-GDP = adenosylcob(III)alamin 5'-phosphate + GMP + H(+). Its pathway is cofactor biosynthesis; adenosylcobalamin biosynthesis; adenosylcobalamin from cob(II)yrinate a,c-diamide: step 7/7. Joins adenosylcobinamide-GDP and alpha-ribazole to generate adenosylcobalamin (Ado-cobalamin). Also synthesizes adenosylcobalamin 5'-phosphate from adenosylcobinamide-GDP and alpha-ribazole 5'-phosphate. The protein is Adenosylcobinamide-GDP ribazoletransferase of Thermococcus onnurineus (strain NA1).